A 146-amino-acid polypeptide reads, in one-letter code: Large ribosomal subunit protein uL23m (146 aa).

The segment at 108 to 138 (PDLFPEKDPRSPEPLEEELPQQRQSSDLRCP) is disordered. Residues 111-120 (FPEKDPRSPE) show a composition bias toward basic and acidic residues.

It belongs to the universal ribosomal protein uL23 family. As to quaternary structure, component of the mitochondrial ribosome large subunit (39S) which comprises a 16S rRNA and about 50 distinct proteins.

The protein resides in the mitochondrion. The sequence is that of Large ribosomal subunit protein uL23m (Mrpl23) from Mus musculus (Mouse).